Here is an 83-residue protein sequence, read N- to C-terminus: Putative snRNP Sm-like protein (83 aa).

In terms of domain architecture, Sm spans 9–81 (KPMDVLKNAL…VIFVSPSKGD (73 aa)).

This sequence belongs to the snRNP Sm proteins family.

The chain is Putative snRNP Sm-like protein from Thermoplasma volcanium (strain ATCC 51530 / DSM 4299 / JCM 9571 / NBRC 15438 / GSS1).